The primary structure comprises 113 residues: Putative pterin-4-alpha-carbinolamine dehydratase (113 aa).

The protein belongs to the pterin-4-alpha-carbinolamine dehydratase family.

The enzyme catalyses (4aS,6R)-4a-hydroxy-L-erythro-5,6,7,8-tetrahydrobiopterin = (6R)-L-erythro-6,7-dihydrobiopterin + H2O. This chain is Putative pterin-4-alpha-carbinolamine dehydratase, found in Hydrogenovibrio crunogenus (strain DSM 25203 / XCL-2) (Thiomicrospira crunogena).